The chain runs to 118 residues: Cysteine--tRNA ligase (118 aa).

Cys-28 lines the Zn(2+) pocket. The short motif at 30-40 (PTVYNYIHIGN) is the 'HIGH' region element.

It belongs to the class-I aminoacyl-tRNA synthetase family. In terms of assembly, monomer. It depends on Zn(2+) as a cofactor.

Its subcellular location is the cytoplasm. It catalyses the reaction tRNA(Cys) + L-cysteine + ATP = L-cysteinyl-tRNA(Cys) + AMP + diphosphate. This chain is Cysteine--tRNA ligase (cysS), found in Staphylococcus xylosus.